A 203-amino-acid chain; its full sequence is Urease accessory protein UreG (203 aa).

14–21 provides a ligand contact to GTP; that stretch reads GPVGSGKT.

Belongs to the SIMIBI class G3E GTPase family. UreG subfamily. As to quaternary structure, homodimer. UreD, UreF and UreG form a complex that acts as a GTP-hydrolysis-dependent molecular chaperone, activating the urease apoprotein by helping to assemble the nickel containing metallocenter of UreC. The UreE protein probably delivers the nickel.

It is found in the cytoplasm. Functionally, facilitates the functional incorporation of the urease nickel metallocenter. This process requires GTP hydrolysis, probably effectuated by UreG. The sequence is that of Urease accessory protein UreG from Rhizobium rhizogenes (strain K84 / ATCC BAA-868) (Agrobacterium radiobacter).